Reading from the N-terminus, the 164-residue chain is Small ribosomal subunit protein uS5 (164 aa).

Residues 10–73 enclose the S5 DRBM domain; it reads IEERVVAINR…ESAKKNMIEV (64 aa).

The protein belongs to the universal ribosomal protein uS5 family. Part of the 30S ribosomal subunit. Contacts proteins S4 and S8.

In terms of biological role, with S4 and S12 plays an important role in translational accuracy. Functionally, located at the back of the 30S subunit body where it stabilizes the conformation of the head with respect to the body. The chain is Small ribosomal subunit protein uS5 from Streptococcus suis (strain 98HAH33).